A 118-amino-acid polypeptide reads, in one-letter code: Large ribosomal subunit protein bL20 (118 aa).

This sequence belongs to the bacterial ribosomal protein bL20 family.

Its function is as follows. Binds directly to 23S ribosomal RNA and is necessary for the in vitro assembly process of the 50S ribosomal subunit. It is not involved in the protein synthesizing functions of that subunit. The polypeptide is Large ribosomal subunit protein bL20 (Azotobacter vinelandii).